Consider the following 227-residue polypeptide: Probable methylthioribulose-1-phosphate dehydratase (227 aa).

A substrate-binding site is contributed by Cys-87. His-105 and His-107 together coordinate Zn(2+). The active-site Proton donor/acceptor is the Glu-129. His-185 is a binding site for Zn(2+).

This sequence belongs to the aldolase class II family. MtnB subfamily. Zn(2+) is required as a cofactor.

It is found in the cytoplasm. The enzyme catalyses 5-(methylsulfanyl)-D-ribulose 1-phosphate = 5-methylsulfanyl-2,3-dioxopentyl phosphate + H2O. Its pathway is amino-acid biosynthesis; L-methionine biosynthesis via salvage pathway; L-methionine from S-methyl-5-thio-alpha-D-ribose 1-phosphate: step 2/6. Functionally, catalyzes the dehydration of methylthioribulose-1-phosphate (MTRu-1-P) into 2,3-diketo-5-methylthiopentyl-1-phosphate (DK-MTP-1-P). In Drosophila ananassae (Fruit fly), this protein is Probable methylthioribulose-1-phosphate dehydratase.